The following is a 111-amino-acid chain: Cyanovirin-N homolog (111 aa).

Belongs to the cyanovirin-N family.

Its function is as follows. Mannose-binding lectin. The polypeptide is Cyanovirin-N homolog (Neurospora crassa (strain ATCC 24698 / 74-OR23-1A / CBS 708.71 / DSM 1257 / FGSC 987)).